Reading from the N-terminus, the 1063-residue chain is Structural polyprotein (1063 aa).

The segment at Met-1 to Ala-131 is disordered. A human C1QBP/SF2P32-binding region spans residues Gly-30–Gly-69. Ser-46 carries the phosphoserine; by host modification. The span at Pro-59–Gly-69 shows a compositional bias: basic residues. Positions Gln-70–Thr-87 are enriched in basic and acidic residues. The span at Ala-93 to Pro-107 shows a compositional bias: pro residues. The cysteines at positions 153 and 197 are disulfide-linked. The tract at residues Gly-279–Ala-300 is functions as E2 signal peptide. At Gly-301–Ser-534 the chain is on the extracellular side. Residues Asn-353, Asn-371, Asn-410, and Asn-429 are each glycosylated (N-linked (GlcNAc...) asparagine; by host). The chain crosses the membrane as a helical span at residues Leu-535–Cys-555. Residues Arg-556 to Gly-582 lie on the Cytoplasmic side of the membrane. The segment at Gly-563–Gly-582 is functions as E1 signal peptide. Residues Glu-583 to His-1028 lie on the Extracellular side of the membrane. 8 cysteine pairs are disulfide-bonded: Cys-590-Cys-595, Cys-619-Cys-824, Cys-641-Cys-653, Cys-699-Cys-712, Cys-758-Cys-767, Cys-807-Cys-817, Cys-931-Cys-934, and Cys-950-Cys-983. A glycan (N-linked (GlcNAc...) asparagine; by host) is linked at Asn-658. Asn-670 and Ala-671 together coordinate Ca(2+). Asp-718 and Thr-719 together coordinate Ca(2+). 2 N-linked (GlcNAc...) asparagine; by host glycosylation sites follow: Asn-759 and Asn-791. Thr-1011 and Thr-1012 each carry an O-linked (GalNAc...) threonine; by host glycan. The helical transmembrane segment at Trp-1029–Cys-1049 threads the bilayer. The Extracellular portion of the chain corresponds to Ala-1050–Arg-1063.

In terms of assembly, homodimer; further assembles into homooligomer. Interacts with human C1QBP. Interacts (via N-terminus) with protease/methyltransferase p150. Heterodimer with spike glycoprotein E2. As to quaternary structure, heterodimer with spike glycoprotein E1. Structural polyprotein: Specific enzymatic cleavages in vivo yield mature proteins. Two signal peptidase-mediated cleavages within the polyprotein produce the structural proteins capsid, E2, and E1. The E2 signal peptide remains attached to the C-terminus of the capsid protein after cleavage by the signal peptidase. Another signal peptide at E2 C-terminus directs E1 to the ER, with a similar mechanism. In terms of processing, contains three N-linked oligosaccharides. Post-translationally, capsid is phosphorylated on Ser-46 by host. This phosphorylation negatively regulates capsid protein RNA-binding activity. Dephosphorylated by human PP1A.

The protein localises to the virion. It localises to the host cytoplasm. Its subcellular location is the host mitochondrion. It is found in the virion membrane. The protein resides in the host Golgi apparatus membrane. Capsid protein interacts with genomic RNA and assembles into icosahedric core particles 65-70 nm in diameter. The resulting nucleocapsid eventually associates with the cytoplasmic domain of E2 at the cell membrane, leading to budding and formation of mature virions from host Golgi membranes. Phosphorylation negatively regulates RNA-binding activity, possibly delaying virion assembly during the viral replication phase. Capsid protein dimerizes and becomes disulfide-linked in the virion. Modulates genomic RNA replication. Modulates subgenomic RNA synthesis by interacting with human C1QBP/SF2P32. Induces both perinuclear clustering of mitochondria and the formation of electron-dense intermitochondrial plaques, both hallmarks of rubella virus infected cells. Induces apoptosis when expressed in transfected cells. Its function is as follows. Responsible for viral attachment to target host cell, by binding to the cell receptor. Its transport to the plasma membrane depends on interaction with E1 protein. The surface glycoproteins display an irregular helical organization and a pseudo-tetrameric inner nucleocapsid arrangement. Functionally, class II viral fusion protein. Fusion activity is inactive as long as E1 is bound to E2 in mature virion. After virus attachment to target cell and clathrin-mediated endocytosis, acidification of the endosome would induce dissociation of E1/E2 heterodimer and concomitant trimerization of the E1 subunits. This E1 homotrimer is fusion active, and promotes release of viral nucleocapsid in cytoplasm after endosome and viral membrane fusion. The cytoplasmic tail of spike glycoprotein E1 modulates virus release. The surface glycoproteins display an irregular helical organization and a pseudo-tetrameric inner nucleocapsid arrangement. This chain is Structural polyprotein, found in Rubella virus (strain Therien) (RUBV).